The primary structure comprises 156 residues: MSRKKRYFKTVILNDPKFGSYIIAKFISYIMNNGKKNLAQKIFYYSISIISIRLNKNPFILIKKILYNVQPDFEIKKKKIGGSVYKIPIKINLKRSLMFSMKWIVKNSKLRNENGYKNKLVGELIDSYYNNSLSTKQKDELNKIIDQNKAYSNFKI.

This sequence belongs to the universal ribosomal protein uS7 family. In terms of assembly, part of the 30S ribosomal subunit. Contacts proteins S9 and S11.

One of the primary rRNA binding proteins, it binds directly to 16S rRNA where it nucleates assembly of the head domain of the 30S subunit. Is located at the subunit interface close to the decoding center, probably blocks exit of the E-site tRNA. The protein is Small ribosomal subunit protein uS7 of Carsonella ruddii.